A 651-amino-acid polypeptide reads, in one-letter code: F-box only protein 43 (651 aa).

2 disordered regions span residues 14–42 and 140–171; these read MTAG…LKGF and LRRI…TSTL. Positions 27–36 are enriched in polar residues; that stretch reads TSVSQDSGYS. Phosphoserine; by PLK1 is present on Ser-33. Thr-195 is subject to Phosphothreonine; by CaMK2. Residues 424–499 enclose the F-box domain; it reads SGCFELPEDS…QDKSAHQRRK (76 aa). The ZBR-type zinc finger occupies 579–627; that stretch reads ALKPCPRCQYPAKYQALKKRGTCSRKDCGFDFCSLCLCTFHGSKECGTG. Positions 583, 586, 601, 606, 611, 614, 619, and 624 each coordinate Zn(2+).

In terms of assembly, part of a SCF (SKP1-cullin-F-box) protein ligase complex. Interaction with SKP1 does not occur. Post-translationally, phosphorylated on Thr-195 by CaMK2 in response to calcium during egg activation, which promotes subsequent phosphorylation by PLK1, ubiquitination and protesomal degradation. In terms of processing, ubiquitinated by FBXW1 during egg activation, which promotes proteasomal degradation.

It participates in protein modification; protein ubiquitination. Functionally, required to prevent anaphase onset in cytostatic factor-arrested oocytes. Inhibits the anaphase-promoting complex/cyclosome (APC/C) ubiquitin ligase and prevents cyclin degradation. Probably recognizes and binds to some phosphorylated proteins and promotes their ubiquitination and degradation. In Xenopus laevis (African clawed frog), this protein is F-box only protein 43 (fbxo43).